The primary structure comprises 364 residues: Homeobox protein Nkx-6.1 (364 aa).

Positions 35–134 are disordered; sequence LYPATYPPLP…SSSSSASATS (100 aa). Low complexity-rich tracts occupy residues 48–92 and 109–134; these read PSSS…LSAA and ASGAALPSASPSGSSSSSSSSASATS. The interval 101-268 is repressor domain; the sequence is LSRPSMPVAS…KYLAGPERAR (168 aa). Residue Arg189 is modified to Asymmetric dimethylarginine. The segment at residues 236–295 is a DNA-binding region (homeobox); the sequence is RKHTRPTFSGQQIFALEKTFEQTKYLAGPERARLAYSLGMTESQVKVWFQNRRTKWRKKH. Residues 294–364 are disordered; sequence KHAAEMATAK…LHASEAEGSS (71 aa). Residues 304 to 317 show a composition bias toward basic and acidic residues; that stretch reads KKQDSETERLKGTS. Residues 306-364 form an involved in DNA-binding region; the sequence is QDSETERLKGTSENEEEDDDYNKPLDPNSDDEKITQLLKKHKSSSGGLLLHASEAEGSS.

In terms of tissue distribution, pancreatic beta cells.

Its subcellular location is the nucleus. Together with NKX2-2 and IRX3 acts to restrict the generation of motor neurons to the appropriate region of the neural tube. Belongs to the class II proteins of neuronal progenitor factors, which are induced by SHH signals. Transcription factor which binds to specific A/T-rich DNA sequences in the promoter regions of a number of genes. Involved in transcriptional regulation in islet beta cells. Binds to the insulin promoter and is involved in regulation of the insulin gene. The protein is Homeobox protein Nkx-6.1 (NKX6-1) of Mesocricetus auratus (Golden hamster).